The following is a 138-amino-acid chain: MSQSTAYIILNILVILAGCFITACGIYLFVNGLFHSIIGFVLGIYYLLAGVCIVLLEIVFPQKLVNLFGFYTYWFGKGALISLIGLLILGNSGFFLAAGIIVIAVGIVCMIFHFLLGCPRPLINRSVERKPEPQGQHA.

The next 4 helical transmembrane spans lie at 12–30 (ILVI…YLFV), 32–56 (GLFH…IVLL), 71–90 (YTYW…LILG), and 93–118 (GFFL…LLGC).

It is found in the membrane. In Dictyostelium discoideum (Social amoeba), this protein is Membrane protein P8A7 (pmpA).